Here is a 169-residue protein sequence, read N- to C-terminus: Probable calcium-binding protein CML13 (169 aa).

Positions Met-1–Arg-26 are disordered. Residues Gly-15 to Gln-24 show a composition bias toward basic residues. 4 consecutive EF-hand domains span residues Gln-24–Glu-59, Met-60–Glu-95, Asp-97–Asn-132, and Phe-133–Gly-168. Ca(2+)-binding residues include Asp-37, Asp-39, Ser-41, Thr-43, Glu-48, Asp-73, Asp-75, Ser-77, Ser-79, Glu-84, Asp-110, Asp-112, Asn-114, Lys-116, Asp-121, Asp-146, Asn-148, Asp-150, Glu-152, and Glu-157.

In terms of biological role, potential calcium sensor. This is Probable calcium-binding protein CML13 (CML13) from Oryza sativa subsp. japonica (Rice).